The primary structure comprises 288 residues: Elongation factor Ts (288 aa).

The tract at residues 82-85 (TDFV) is involved in Mg(2+) ion dislocation from EF-Tu.

The protein belongs to the EF-Ts family.

It localises to the cytoplasm. Functionally, associates with the EF-Tu.GDP complex and induces the exchange of GDP to GTP. It remains bound to the aminoacyl-tRNA.EF-Tu.GTP complex up to the GTP hydrolysis stage on the ribosome. The chain is Elongation factor Ts from Chlorobium luteolum (strain DSM 273 / BCRC 81028 / 2530) (Pelodictyon luteolum).